A 417-amino-acid polypeptide reads, in one-letter code: UPF0761 membrane protein Veis_3782 (417 aa).

Helical transmembrane passes span 54–74, 111–131, 151–171, 192–212, 226–246, and 261–281; these read ILAL…FPIF, GLGL…ILTI, VLIY…SLAL, FLFD…LYHY, GGLF…LYLG, and LPIL…GAVV.

Belongs to the UPF0761 family.

The protein localises to the cell inner membrane. The polypeptide is UPF0761 membrane protein Veis_3782 (Verminephrobacter eiseniae (strain EF01-2)).